The following is a 517-amino-acid chain: GMP synthase [glutamine-hydrolyzing] (517 aa).

In terms of domain architecture, Glutamine amidotransferase type-1 spans 11-202 (KIIALDFGSQ…AFDVCGAKAN (192 aa)). C88 serves as the catalytic Nucleophile. Catalysis depends on residues H176 and E178. A GMPS ATP-PPase domain is found at 203-392 (WTMDDFIDMQ…LGIPHELVWR (190 aa)). 230-236 (SGGVDSS) provides a ligand contact to ATP.

Homodimer.

The catalysed reaction is XMP + L-glutamine + ATP + H2O = GMP + L-glutamate + AMP + diphosphate + 2 H(+). Its pathway is purine metabolism; GMP biosynthesis; GMP from XMP (L-Gln route): step 1/1. Its function is as follows. Catalyzes the synthesis of GMP from XMP. This chain is GMP synthase [glutamine-hydrolyzing], found in Limosilactobacillus reuteri (strain DSM 20016) (Lactobacillus reuteri).